Consider the following 391-residue polypeptide: MSGPVPSRARVYTDVNTHRPREYWDYESHVVEWGNQDDYQLVRKLGRGKYSEVFEAINITNNEKVVVKILKPVKKKKIKREIKILENLRGGPNIITLADIVKDPVSRTPALVFEHVNNTDFKQLYQTLTDYDIRFYMYEILKALDYCHSMGIMHRDVKPHNVMIDHEHRKLRLIDWGLAEFYHPGQEYNVRVASRYFKGPELLVDYQMYDYSLDMWSLGCMLASMIFRKEPFFHGHDNYDQLVRIAKVLGTEDLYDYIDKYNIELDPRFNDILGRHSRKRWERFVHSENQHLVSPEALDFLDKLLRYDHQSRLTAREAMEHPYFYTVVKDQARMGSSSMPGGSTPVSSANMMSGISSVPTPSPLGPLAGSPVIAAANPLGMPVPAAAGAQQ.

The segment at glutamine 36 to leucine 41 is interaction with beta subunit. In terms of domain architecture, Protein kinase spans tyrosine 39 to phenylalanine 324. ATP is bound by residues leucine 45–valine 53 and lysine 68. Residue aspartate 156 is the Proton acceptor of the active site. Residues threonine 344 and threonine 360 each carry the phosphothreonine; by CDK1 modification. Phosphoserine; by CDK1 occurs at positions 362 and 370.

The protein belongs to the protein kinase superfamily. Ser/Thr protein kinase family. CK2 subfamily. Heterotetramer composed of two catalytic subunits (alpha chain and/or alpha' chain) and two regulatory subunits (beta chains). The tetramer can exist as a combination of 2 alpha/2 beta, 2 alpha'/2 beta or 1 alpha/1 alpha'/2 beta subunits. Also part of a CK2-SPT16-SSRP1 complex composed of SSRP1, SUPT16H, CSNK2A1, CSNK2A2 and CSNK2B, which forms following UV irradiation. Interacts with RNPS1. Interacts with SNAI1. Interacts with PML. Interacts with CCAR2. Interacts with HIRIP3. Phosphorylated at Thr-344, Thr-360, Ser-362 and Ser-370 by CDK1 in prophase and metaphase and dephosphorylated during anaphase. Phosphorylation does not directly affect casein kinase 2 activity, but may contribute to its regulation by forming binding sites for interacting proteins and/or targeting it to different compartments.

Its subcellular location is the nucleus. It catalyses the reaction L-seryl-[protein] + ATP = O-phospho-L-seryl-[protein] + ADP + H(+). The catalysed reaction is L-threonyl-[protein] + ATP = O-phospho-L-threonyl-[protein] + ADP + H(+). With respect to regulation, constitutively active protein kinase whose activity is not directly affected by phosphorylation. Seems to be regulated by level of expression and localization. Its function is as follows. Catalytic subunit of a constitutively active serine/threonine-protein kinase complex that phosphorylates a large number of substrates containing acidic residues C-terminal to the phosphorylated serine or threonine. Regulates numerous cellular processes, such as cell cycle progression, apoptosis and transcription, as well as viral infection. May act as a regulatory node which integrates and coordinates numerous signals leading to an appropriate cellular response. During mitosis, functions as a component of the p53/TP53-dependent spindle assembly checkpoint (SAC) that maintains cyclin-B-CDK1 activity and G2 arrest in response to spindle damage. Also required for p53/TP53-mediated apoptosis, phosphorylating 'Ser-392' of p53/TP53 following UV irradiation. Phosphorylates a number of DNA repair proteins in response to DNA damage, such as MDC1, MRE11, RAD9A, RAD51 and HTATSF1, promoting their recruitment to DNA damage sites. Can also negatively regulate apoptosis. Phosphorylates the caspases CASP9 and CASP2 and the apoptotic regulator NOL3. Phosphorylation protects CASP9 from cleavage and activation by CASP8, and inhibits the dimerization of CASP2 and activation of CASP8. Phosphorylates YY1, protecting YY1 from cleavage by CASP7 during apoptosis. Regulates transcription by direct phosphorylation of RNA polymerases I, II, III and IV. Also phosphorylates and regulates numerous transcription factors including NF-kappa-B, STAT1, CREB1, IRF1, IRF2, ATF1, ATF4, SRF, MAX, JUN, FOS, MYC and MYB. Phosphorylates Hsp90 and its co-chaperones FKBP4 and CDC37, which is essential for chaperone function. Mediates sequential phosphorylation of FNIP1, promoting its gradual interaction with Hsp90, leading to activate both kinase and non-kinase client proteins of Hsp90. Regulates Wnt signaling by phosphorylating CTNNB1 and the transcription factor LEF1. Acts as an ectokinase that phosphorylates several extracellular proteins. Plays an important role in the circadian clock function by phosphorylating BMAL1 at 'Ser-90' which is pivotal for its interaction with CLOCK and which controls CLOCK nuclear entry. Phosphorylates FMR1, promoting FMR1-dependent formation of a membraneless compartment. May phosphorylate histone H2A on 'Ser-1'. This is Casein kinase II subunit alpha (CSNK2A1) from Bos taurus (Bovine).